The sequence spans 194 residues: Ion-translocating oxidoreductase complex subunit A (194 aa).

A run of 6 helical transmembrane segments spans residues L4–G24, I39–L59, L72–V92, V102–L122, T135–L155, and A172–V192.

The protein belongs to the NqrDE/RnfAE family. The complex is composed of six subunits: RnfA, RnfB, RnfC, RnfD, RnfE and RnfG.

It localises to the cell inner membrane. In terms of biological role, part of a membrane-bound complex that couples electron transfer with translocation of ions across the membrane. The polypeptide is Ion-translocating oxidoreductase complex subunit A (Pseudomonas aeruginosa (strain LESB58)).